A 158-amino-acid polypeptide reads, in one-letter code: Transcription elongation factor GreA (158 aa).

A coiled-coil region spans residues 10 to 75; the sequence is TKEGKEKLEQ…QMLENMIRNA (66 aa).

The protein belongs to the GreA/GreB family.

Functionally, necessary for efficient RNA polymerase transcription elongation past template-encoded arresting sites. The arresting sites in DNA have the property of trapping a certain fraction of elongating RNA polymerases that pass through, resulting in locked ternary complexes. Cleavage of the nascent transcript by cleavage factors such as GreA or GreB allows the resumption of elongation from the new 3'terminus. GreA releases sequences of 2 to 3 nucleotides. This is Transcription elongation factor GreA from Geobacillus kaustophilus (strain HTA426).